The following is a 652-amino-acid chain: DNA ligase (652 aa).

Residues 29-33, 78-79, and Glu107 each bind NAD(+); these read DSEYD and SL. Residue Lys109 is the N6-AMP-lysine intermediate of the active site. Positions 130, 164, 278, and 302 each coordinate NAD(+). Residues Cys395, Cys398, Cys413, and Cys418 each coordinate Zn(2+). In terms of domain architecture, BRCT spans 577–652; it reads VADAALSGLT…VRDEAWLESL (76 aa).

Belongs to the NAD-dependent DNA ligase family. LigA subfamily. Mg(2+) serves as cofactor. Requires Mn(2+) as cofactor.

It carries out the reaction NAD(+) + (deoxyribonucleotide)n-3'-hydroxyl + 5'-phospho-(deoxyribonucleotide)m = (deoxyribonucleotide)n+m + AMP + beta-nicotinamide D-nucleotide.. Functionally, DNA ligase that catalyzes the formation of phosphodiester linkages between 5'-phosphoryl and 3'-hydroxyl groups in double-stranded DNA using NAD as a coenzyme and as the energy source for the reaction. It is essential for DNA replication and repair of damaged DNA. The chain is DNA ligase from Streptococcus pneumoniae (strain Taiwan19F-14).